A 442-amino-acid chain; its full sequence is Proline--tRNA ligase (442 aa).

It belongs to the class-II aminoacyl-tRNA synthetase family. ProS type 2 subfamily. Homodimer.

It localises to the cytoplasm. The enzyme catalyses tRNA(Pro) + L-proline + ATP = L-prolyl-tRNA(Pro) + AMP + diphosphate. In terms of biological role, catalyzes the attachment of proline to tRNA(Pro) in a two-step reaction: proline is first activated by ATP to form Pro-AMP and then transferred to the acceptor end of tRNA(Pro). The protein is Proline--tRNA ligase of Chelativorans sp. (strain BNC1).